Here is a 218-residue protein sequence, read N- to C-terminus: Phosphoglycolate phosphatase (218 aa).

Aspartate 7 acts as the Nucleophile in catalysis. Aspartate 7, aspartate 9, and aspartate 167 together coordinate Mg(2+).

This sequence belongs to the HAD-like hydrolase superfamily. CbbY/CbbZ/Gph/YieH family. Requires Mg(2+) as cofactor.

It carries out the reaction 2-phosphoglycolate + H2O = glycolate + phosphate. The protein operates within organic acid metabolism; glycolate biosynthesis; glycolate from 2-phosphoglycolate: step 1/1. In terms of biological role, specifically catalyzes the dephosphorylation of 2-phosphoglycolate. Is involved in the dissimilation of the intracellular 2-phosphoglycolate formed during the DNA repair of 3'-phosphoglycolate ends, a major class of DNA lesions induced by oxidative stress. The polypeptide is Phosphoglycolate phosphatase (Cereibacter sphaeroides (Rhodobacter sphaeroides)).